The primary structure comprises 254 residues: Thiazole synthase (254 aa).

Catalysis depends on K95, which acts as the Schiff-base intermediate with DXP. 1-deoxy-D-xylulose 5-phosphate-binding positions include G156, 182-183 (AG), and 204-205 (NT).

This sequence belongs to the ThiG family. Homotetramer. Forms heterodimers with either ThiH or ThiS.

It localises to the cytoplasm. The catalysed reaction is [ThiS sulfur-carrier protein]-C-terminal-Gly-aminoethanethioate + 2-iminoacetate + 1-deoxy-D-xylulose 5-phosphate = [ThiS sulfur-carrier protein]-C-terminal Gly-Gly + 2-[(2R,5Z)-2-carboxy-4-methylthiazol-5(2H)-ylidene]ethyl phosphate + 2 H2O + H(+). Its pathway is cofactor biosynthesis; thiamine diphosphate biosynthesis. Functionally, catalyzes the rearrangement of 1-deoxy-D-xylulose 5-phosphate (DXP) to produce the thiazole phosphate moiety of thiamine. Sulfur is provided by the thiocarboxylate moiety of the carrier protein ThiS. In vitro, sulfur can be provided by H(2)S. This is Thiazole synthase from Shewanella sp. (strain W3-18-1).